A 128-amino-acid chain; its full sequence is Flagellar basal body rod protein FlgB (128 aa).

The protein belongs to the flagella basal body rod proteins family. The basal body constitutes a major portion of the flagellar organelle and consists of a number of rings mounted on a central rod. In Gram-negative bacteria, at least four rings, L, P, S and M are present, whereas Gram-positive bacteria lack the L and P rings. The rod consists of about 26 subunits of FlgG in the distal portion, and FlgB, FlgC and FlgF build up the proximal portion of the rod with about 6 subunits each. Rod assembly occurs by export via the flagellum-specific pathway of its constituent proteins and by their incorporation into the rod structure in the probable order of FlgB, FlgC, FlgF and FlgG. Another protein, FliE, also assembles onto the stable rod structure.

It localises to the bacterial flagellum basal body. Functionally, structural component of flagellum, the bacterial motility apparatus. Part of the rod structure of flagellar basal body. In Cereibacter sphaeroides (strain ATCC 17029 / ATH 2.4.9) (Rhodobacter sphaeroides), this protein is Flagellar basal body rod protein FlgB.